Consider the following 448-residue polypeptide: Trigger factor (448 aa).

A PPIase FKBP-type domain is found at Gly167 to Pro253.

This sequence belongs to the FKBP-type PPIase family. Tig subfamily.

It localises to the cytoplasm. It carries out the reaction [protein]-peptidylproline (omega=180) = [protein]-peptidylproline (omega=0). Functionally, involved in protein export. Acts as a chaperone by maintaining the newly synthesized protein in an open conformation. Functions as a peptidyl-prolyl cis-trans isomerase. In Borrelia turicatae (strain 91E135), this protein is Trigger factor.